The sequence spans 103 residues: uncharacterized protein (103 aa).

Residues 12 to 88 (ADPAAFDEHY…AAADVANFAS (77 aa)) form the EthD domain.

This is an uncharacterized protein from Rhodococcus erythropolis (Arthrobacter picolinophilus).